A 99-amino-acid chain; its full sequence is Integration host factor subunit alpha (99 aa).

This sequence belongs to the bacterial histone-like protein family. As to quaternary structure, heterodimer of an alpha and a beta chain.

Functionally, this protein is one of the two subunits of integration host factor, a specific DNA-binding protein that functions in genetic recombination as well as in transcriptional and translational control. This is Integration host factor subunit alpha from Pseudoalteromonas translucida (strain TAC 125).